The following is a 290-amino-acid chain: Syntaxin-1A (290 aa).

The disordered stretch occupies residues 1–21 (MTKDRLAALQAAQSDDEDMPE). At 1-267 (MTKDRLAALQ…KYQSKARRKK (267 aa)) the chain is on the cytoplasmic side. The region spanning 194–256 (LADIEARHAD…QTATQDTKKA (63 aa)) is the t-SNARE coiled-coil homology domain. A helical; Anchor for type IV membrane protein membrane pass occupies residues 268–289 (IWIAICVLIAIIILVVFLAIYL). A topological domain (vesicular) is located at residue threonine 290.

This sequence belongs to the syntaxin family. In terms of processing, (Microbial infection) Targeted and hydrolyzed by the light chain (LC) of P.bifermentans PMP1. Cleavage probably inhibits neurotransmitter release.

Its subcellular location is the cytoplasmic vesicle. The protein localises to the secretory vesicle. It localises to the synaptic vesicle membrane. In terms of biological role, plays a critical role in several secretory processes. The protein is Syntaxin-1A of Anopheles gambiae (African malaria mosquito).